Reading from the N-terminus, the 479-residue chain is Sodium-coupled neutral amino acid transporter 5 (479 aa).

Residues 1-58 lie on the Cytoplasmic side of the membrane; the sequence is MAISCAVGMEMQEPKMNGTLSTGAAAGYRQEREGFLPTTHGPAPGRKPVQFLDFEGKT. The chain crosses the membrane as a helical span at residues 59 to 81; sequence SFGMSVFNLSNAIMGSGILGLAY. Residues 82-97 lie on the Extracellular side of the membrane; that stretch reads AMAHTGVIFFLALLLC. Residues 98–118 traverse the membrane as a helical segment; the sequence is IALLSSYSIHLLLTCASVVGI. The Cytoplasmic portion of the chain corresponds to 119–135; the sequence is RAYEQLGQRAFGPAGKV. A helical transmembrane segment spans residues 136–156; the sequence is VVAIIICLHNVGAMSSYLFII. Residues 157–176 are Extracellular-facing; the sequence is KSELPLVIGTFLHMDPEGDW. The helical transmembrane segment at 177–197 threads the bilayer; it reads FLKGNLLIILVSLLIILPLAL. Residues 198–202 are Cytoplasmic-facing; it reads MKHLG. A helical membrane pass occupies residues 203–223; it reads YLGYTSSLSLTCMLFFLISVI. The Extracellular segment spans residues 224 to 264; that stretch reads YKKFQLGCVVSHNDTVVESEPAPLQAFNSSCEAKLFTVDSQ. An intrachain disulfide couples C231 to C254. N236 is a glycosylation site (N-linked (GlcNAc...) asparagine). The chain crosses the membrane as a helical span at residues 265–285; that stretch reads MSYTVPIMAFAFVCHPEVLPI. Residues 286-302 lie on the Cytoplasmic side of the membrane; the sequence is YTELCCPTQRRMQAVAN. The chain crosses the membrane as a helical span at residues 303–323; it reads MSIGAMFIMYGLTATFGYLTF. At 324-341 the chain is on the extracellular side; that stretch reads YSTVKAEMLEMYTQEDLL. A helical transmembrane segment spans residues 342–362; sequence ILCVRLAVLLAVTLTVPVVLF. At 363-383 the chain is on the cytoplasmic side; that stretch reads PIRRALQQLLFPSKAFSWPRH. A helical membrane pass occupies residues 384–404; it reads VAIALILLILVNILVICVPTI. Over 405 to 406 the chain is Extracellular; sequence RD. Residues 407–427 form a helical membrane-spanning segment; that stretch reads IFGFIGSTSAPSLIFILPSVF. Residues 428 to 446 lie on the Cytoplasmic side of the membrane; the sequence is YLRIVPADMEPLFSWPKIQ. Residues 447–467 traverse the membrane as a helical segment; it reads ALCFGVLGVLFMAISLGFMFA. Over 468 to 479 the chain is Extracellular; the sequence is NWATGQSRMSGH.

This sequence belongs to the amino acid/polyamine transporter 2 family. In terms of tissue distribution, highly expressed in neocortex, hippocampus, striatum and spinal cord by astrocytes (at protein level). Expressed in brain, lung, stomach, kidney, spleen and testis. Expressed in the cerebral cortex between the second and third postnatal week, where expressed exclusively in glial cells from postnatal day 14 to adulthood (at protein level). Expressed in the cerebellum at post natal day 12 (P12). Expressed in liver. Expressed inside the cell body of the astrocytes.

The protein localises to the cell membrane. The enzyme catalyses L-serine(out) + Na(+)(out) + H(+)(in) = L-serine(in) + Na(+)(in) + H(+)(out). The catalysed reaction is L-alanine(out) + Na(+)(out) + H(+)(in) = L-alanine(in) + Na(+)(in) + H(+)(out). It catalyses the reaction glycine(out) + Na(+)(out) + H(+)(in) = glycine(in) + Na(+)(in) + H(+)(out). It carries out the reaction L-glutamine(out) + Na(+)(out) + H(+)(in) = L-glutamine(in) + Na(+)(in) + H(+)(out). The enzyme catalyses L-asparagine(out) + Na(+)(out) + H(+)(in) = L-asparagine(in) + Na(+)(in) + H(+)(out). The catalysed reaction is L-histidine(out) + Na(+)(out) + H(+)(in) = L-histidine(in) + Na(+)(in) + H(+)(out). It catalyses the reaction L-cysteine(out) + Na(+)(out) + H(+)(in) = L-cysteine(in) + Na(+)(in) + H(+)(out). Its activity is regulated as follows. Not inhibited by lithium. Partial allosteric regulation on ions sodium binding. Functionally, symporter that cotransports neutral amino acids and sodium ions, coupled to an H(+) antiporter activity. Releases L-glutamine and glycine from astroglial cells and may participate in the glutamate/GABA-glutamine cycle and the NMDA receptors activation. In addition contributes significantly to L-glutamine uptake in retina, namely in ganglion and Mueller cells and, therefore participates in the retinal glutamate-glutamine cycle. The transport activity is pH sensitive, Li(+) tolerant, bidirectional and associated with large uncoupled fluxes of protons. The transport is electroneutral coupled to the cotransport of 1 Na(+) and the antiport of 1 H(+). May have particular importance for modulation of net hepatic glutamine flux. This is Sodium-coupled neutral amino acid transporter 5 from Rattus norvegicus (Rat).